A 271-amino-acid polypeptide reads, in one-letter code: Mannosyl-3-phosphoglycerate phosphatase (271 aa).

The active-site Nucleophile is D13. Mg(2+) contacts are provided by D13, D15, and D214.

It belongs to the HAD-like hydrolase superfamily. MPGP family. Mg(2+) serves as cofactor.

The protein resides in the cytoplasm. It carries out the reaction 2-O-(alpha-D-mannosyl)-3-phosphoglycerate + H2O = (2R)-2-O-(alpha-D-mannosyl)-glycerate + phosphate. The protein is Mannosyl-3-phosphoglycerate phosphatase of Escherichia coli O139:H28 (strain E24377A / ETEC).